The following is a 203-amino-acid chain: Holliday junction branch migration complex subunit RuvA (203 aa).

Positions 1–64 (MIGRLRGIIL…EDAQLLYGFN (64 aa)) are domain I. The domain II stretch occupies residues 65-142 (NKQERTLFKE…KGLHGDLFTP (78 aa)). The tract at residues 143-154 (AADLVLTSPASP) is flexible linker. The interval 155–203 (ATDDAEQEAVAALVALGYKPQEASRMVSKIARPDASSETLIREALRAAL) is domain III.

It belongs to the RuvA family. As to quaternary structure, homotetramer. Forms an RuvA(8)-RuvB(12)-Holliday junction (HJ) complex. HJ DNA is sandwiched between 2 RuvA tetramers; dsDNA enters through RuvA and exits via RuvB. An RuvB hexamer assembles on each DNA strand where it exits the tetramer. Each RuvB hexamer is contacted by two RuvA subunits (via domain III) on 2 adjacent RuvB subunits; this complex drives branch migration. In the full resolvosome a probable DNA-RuvA(4)-RuvB(12)-RuvC(2) complex forms which resolves the HJ.

It is found in the cytoplasm. In terms of biological role, the RuvA-RuvB-RuvC complex processes Holliday junction (HJ) DNA during genetic recombination and DNA repair, while the RuvA-RuvB complex plays an important role in the rescue of blocked DNA replication forks via replication fork reversal (RFR). RuvA specifically binds to HJ cruciform DNA, conferring on it an open structure. The RuvB hexamer acts as an ATP-dependent pump, pulling dsDNA into and through the RuvAB complex. HJ branch migration allows RuvC to scan DNA until it finds its consensus sequence, where it cleaves and resolves the cruciform DNA. The polypeptide is Holliday junction branch migration complex subunit RuvA (Citrobacter koseri (strain ATCC BAA-895 / CDC 4225-83 / SGSC4696)).